Reading from the N-terminus, the 415-residue chain is tRNA (cytosine(38)-C(5))-methyltransferase (415 aa).

An SAM-dependent MTase C5-type domain is found at 4–396; it reads LRVLELYSGI…TVLCEGFGNA (393 aa). Residues 13–15, Asp34, 57–58, and Ser76 each bind S-adenosyl-L-methionine; these read IGG and IE. Residue Cys79 is part of the active site. Ser376 lines the S-adenosyl-L-methionine pocket.

Belongs to the class I-like SAM-binding methyltransferase superfamily. C5-methyltransferase family. Highly expressed in thymus, testis, and at much lower levels in spleen, lung, brain, heart, kidney, liver, skeletal muscle and embryonic stem cells.

It localises to the cytoplasm. It carries out the reaction cytidine(38) in tRNA + S-adenosyl-L-methionine = 5-methylcytidine(38) in tRNA + S-adenosyl-L-homocysteine + H(+). Specifically methylates cytosine 38 in the anticodon loop of tRNA(Asp). Has higher activity on tRNA(Asp) modified with queuosine at position 34. This Mus musculus (Mouse) protein is tRNA (cytosine(38)-C(5))-methyltransferase (Trdmt1).